A 409-amino-acid polypeptide reads, in one-letter code: Torsin-4A (409 aa).

Residues 1-16 (MGEQDPSDRLRGDQLK) show a composition bias toward basic and acidic residues. Disordered stretches follow at residues 1 to 28 (MGEQ…SFSQ) and 75 to 99 (DNLH…KGRV). Over residues 17-28 (EPNQNGKGSFSQ) the composition is skewed to polar residues. The span at 88-98 (PRKRKKKRKGR) shows a compositional bias: basic residues. The helical transmembrane segment at 120–136 (CLYLLCIIVFLQVYNAI) threads the bilayer. 192 to 199 (GPTGVGKS) contacts ATP.

It belongs to the ClpA/ClpB family. Torsin subfamily.

Its subcellular location is the membrane. This is Torsin-4A (tor4a) from Danio rerio (Zebrafish).